We begin with the raw amino-acid sequence, 134 residues long: Histone H2A (134 aa).

A compositionally biased stretch (gly residues) spans 1–10 (MTGGKSGGKA). A disordered region spans residues 1 to 26 (MTGGKSGGKASGSKSSAQSRSSKAGL). Lysine 5 and lysine 9 each carry N6-acetyllysine. Over residues 11–25 (SGSKSSAQSRSSKAG) the composition is skewed to low complexity. Residue glutamine 107 is modified to N5-methylglutamine. A Phosphoserine modification is found at serine 131. A [ST]-Q motif motif is present at residues 131-132 (SQ).

Belongs to the histone H2A family. As to quaternary structure, the nucleosome is a histone octamer containing two molecules each of H2A, H2B, H3 and H4 assembled in one H3-H4 heterotetramer and two H2A-H2B heterodimers. The octamer wraps approximately 147 bp of DNA. Phosphorylated to form H2AS128ph (gamma-H2A) in response to DNA double-strand breaks (DSBs) generated by exogenous genotoxic agents and by stalled replication forks. Phosphorylation is dependent on the DNA damage checkpoint kinases MEC1/ATR and TEL1/ATM, spreads on either side of a detected DSB site and may mark the surrounding chromatin for recruitment of proteins required for DNA damage signaling and repair. Gamma-H2A is removed from the DNA prior to the strand invasion-primer extension step of the repair process and subsequently dephosphorylated. Dephosphorylation is necessary for efficient recovery from the DNA damage checkpoint. Post-translationally, acetylated by ESA1 to form H2AK4ac and H2AK7ac.

The protein localises to the nucleus. Its subcellular location is the chromosome. Core component of nucleosome which plays a central role in DNA double strand break (DSB) repair. Nucleosomes wrap and compact DNA into chromatin, limiting DNA accessibility to the cellular machineries which require DNA as a template. Histones thereby play a central role in transcription regulation, DNA repair, DNA replication and chromosomal stability. DNA accessibility is regulated via a complex set of post-translational modifications of histones, also called histone code, and nucleosome remodeling. The protein is Histone H2A (HTA1) of Phaeosphaeria nodorum (strain SN15 / ATCC MYA-4574 / FGSC 10173) (Glume blotch fungus).